Consider the following 658-residue polypeptide: Protein teflon (658 aa).

The C2H2-type 1 zinc-finger motif lies at 33–56; it reads LYCHFCRDLFTQLPEFLRHLQGAH. 2 disordered regions span residues 78–127 and 151–175; these read EQDD…SEQK and HINN…SESN. Over residues 100–111 the composition is skewed to basic and acidic residues; that stretch reads IPAKSEDSRAID. Positions 118–127 are enriched in polar residues; the sequence is DNSPVKSEQK. Residues 608–630 form a C2H2-type 2; degenerate zinc finger; sequence YFCKCCDDIFTLNEDYTRHLVSQ. The C2H2-type 3 zinc-finger motif lies at 634–657; it reads YQCTKCIKAFKYRGHFEKHLQNVH.

The protein belongs to the Teflon family.

It localises to the nucleus. The protein localises to the chromosome. Functionally, specifically required in males for proper segregation of autosomal bivalents at meiosis I. Expression is required in the male germ line prior to spermatocyte stage S4. May have a role as a bridging molecule maintaining adhesion to hold autosome bivalents together via heterochromatic connections. The protein is Protein teflon of Drosophila erecta (Fruit fly).